The chain runs to 125 residues: Small ribosomal subunit protein bS6 (125 aa).

This sequence belongs to the bacterial ribosomal protein bS6 family.

In terms of biological role, binds together with bS18 to 16S ribosomal RNA. The protein is Small ribosomal subunit protein bS6 of Baumannia cicadellinicola subsp. Homalodisca coagulata.